The sequence spans 165 residues: Late embryogenesis abundant protein D-113 (165 aa).

The span at 1-13 shows a compositional bias: low complexity; it reads MQSMKDAAASAKA. 2 disordered regions span residues 1–76 and 92–165; these read MQSM…IGGT and GGTG…YRSY. A compositionally biased stretch (basic and acidic residues) spans 14 to 60; that stretch reads GMEKAKASMQEKVDQMKTRDPNEKEMARERKEERQEDAELRKQEARH. Over residues 67–76 the composition is skewed to gly residues; the sequence is HVGGGGIGGT. A compositionally biased stretch (polar residues) spans 132 to 155; sequence TTGNQDFPNAASNNAGTRRNTRGG.

This sequence belongs to the LEA type 1 family.

LEA proteins are late embryonic proteins abundant in higher plant seed embryos. There are two subsets of LEA proteins (5a and 5b), the first ones are expressed when the cotyledon weight reach 80 mg and the second set are expressed above 100 mg. The function of those proteins is not known. The polypeptide is Late embryogenesis abundant protein D-113 (Gossypium hirsutum (Upland cotton)).